The chain runs to 124 residues: Putative iron-sulfur cluster insertion protein ErpA (124 aa).

Iron-sulfur cluster is bound by residues C52, C116, and C118.

This sequence belongs to the HesB/IscA family. As to quaternary structure, homodimer. Requires iron-sulfur cluster as cofactor.

Required for insertion of 4Fe-4S clusters. In Ralstonia pickettii (strain 12J), this protein is Putative iron-sulfur cluster insertion protein ErpA.